The sequence spans 423 residues: Core protease OPG082 (423 aa).

Active-site residues include histidine 241, aspartate 248, and cysteine 328.

Belongs to the peptidase C57 family.

The protein resides in the virion. In terms of biological role, late protein responsible for processing most or all of the viral core and membrane proteins known to undergo morphogenesis-associated proteolysis. These proteolytic events are involved in the transformation of immature virions (IV) into mature virions (MV). Probably cleaves at least the OPG129, OPG136, OPG098, and OPG144 precursors preferentially at Ala-Gly-|-Ala motifs. Also seems to process Ala-Gly-|-Ser and Ala-Gly-|-Thr motifs. The polypeptide is Core protease OPG082 (OPG083) (Homo sapiens (Human)).